We begin with the raw amino-acid sequence, 312 residues long: Terpene synthase 8 (312 aa).

The DDxx(x)D/E motif motif lies at 96–101 (DDYIYE). An NDxxSxxxD/E motif motif is present at residues 224–232 (NDCGSFKME).

It belongs to the terpene synthase family.

The enzyme catalyses (2E,6E)-farnesyl diphosphate + H2O = discoidol + diphosphate. It participates in sesquiterpene biosynthesis. Its function is as follows. Terpene synthase; part of the gene cluster that mediates the biosynthesis of the trisnorsesquiterpene discodiene which has a function during later stages of multicellular development, during the transition from fingers to Mexican hats. The terpene synthase tps8 converts its substrate farnesyl diphosphate (FDP) into the bicyclic sesquiterpene alcohol discoidol. The cytochrome P450 monooxygenase cyp521A1 then catalyzes the oxidative degradation of discoidol to form the trisnorsesquiterpene discodiene. The sequence is that of Terpene synthase 8 from Dictyostelium discoideum (Social amoeba).